A 704-amino-acid chain; its full sequence is Urea-proton symporter DUR3 (704 aa).

A run of 15 helical transmembrane segments spans residues 39-59 (YAVILGFGAFFAVFTSFLVWL), 80-100 (VKTGLIASVIVSQWTWAATIL), 115-135 (FWYASGATIQVLLFGVMAIEI), 159-179 (IVFLVFCLATNVVVTAMLLLG), 192-212 (LYAASFLIPLGVVVYTLAGGL), 216-236 (FLASYVHSVIVHVALVVFVFL), 291-311 (SSGGAVFGLINIVGNFGTVFV), 336-356 (LVWFAVPFSLATSLGLGALAL), 388-408 (LTMLFMAVTSAGSSELIAVSS), 435-455 (AVLGFGCFMGILAVVLNKAGV), 461-481 (YLAMGVLIGSAVIPIAFMLLW), 486-506 (AFGAILGATSGCVFGIITWLT), 527-547 (LAGNLVAILTGGLIHAVCSLV), 590-610 (AWIVKWGLVFTILIVVIWPVL), and 622-642 (FWFWAIVAIAWGTIGSIVIIG).

Belongs to the sodium:solute symporter (SSF) (TC 2.A.21) family. As to expression, expressed in root rhizodermis, including root hairs and cortex in more basal root zones. Expressed in shoots.

The protein resides in the cell membrane. Functionally, high-affinity urea-proton symporter involved in the active transport of urea across the plasma membrane into root cells. May play an important role in urea uptake by plant cells at low external urea concentrations. This Arabidopsis thaliana (Mouse-ear cress) protein is Urea-proton symporter DUR3 (DUR3).